The following is a 302-amino-acid chain: ATP synthase gamma chain (302 aa).

It belongs to the ATPase gamma chain family. As to quaternary structure, F-type ATPases have 2 components, CF(1) - the catalytic core - and CF(0) - the membrane proton channel. CF(1) has five subunits: alpha(3), beta(3), gamma(1), delta(1), epsilon(1). CF(0) has three main subunits: a, b and c.

It localises to the cell membrane. Produces ATP from ADP in the presence of a proton gradient across the membrane. The gamma chain is believed to be important in regulating ATPase activity and the flow of protons through the CF(0) complex. The protein is ATP synthase gamma chain of Enterococcus faecalis (strain ATCC 700802 / V583).